Consider the following 193-residue polypeptide: Large ribosomal subunit protein uL5 (193 aa).

This sequence belongs to the universal ribosomal protein uL5 family. As to quaternary structure, part of the 50S ribosomal subunit; part of the 5S rRNA/L5/L18/L25 subcomplex. Contacts the 5S rRNA and the P site tRNA. Forms a bridge to the 30S subunit in the 70S ribosome.

In terms of biological role, this is one of the proteins that bind and probably mediate the attachment of the 5S RNA into the large ribosomal subunit, where it forms part of the central protuberance. In the 70S ribosome it contacts protein S13 of the 30S subunit (bridge B1b), connecting the 2 subunits; this bridge is implicated in subunit movement. Contacts the P site tRNA; the 5S rRNA and some of its associated proteins might help stabilize positioning of ribosome-bound tRNAs. The chain is Large ribosomal subunit protein uL5 from Arthrobacter sp. (strain FB24).